A 468-amino-acid polypeptide reads, in one-letter code: Lipase 1 (468 aa).

The signal sequence occupies residues 1–16 (MRGIAVFLAFISLIFA). N-linked (GlcNAc...) asparagine glycosylation occurs at Asn-79. Residues Cys-112 and Cys-285 are joined by a disulfide bond. The active-site Charge relay system is the Ser-196. Asn-231 and Asn-319 each carry an N-linked (GlcNAc...) asparagine glycan. Residues Asp-348 and His-381 each act as charge relay system in the active site. An intrachain disulfide couples Cys-364 to Cys-409. Residues Asn-417, Asn-422, and Asn-451 are each glycosylated (N-linked (GlcNAc...) asparagine).

It belongs to the AB hydrolase superfamily. Lipase family. Class Lip subfamily.

The protein localises to the secreted. It carries out the reaction a triacylglycerol + H2O = a diacylglycerol + a fatty acid + H(+). Its function is as follows. Secreted lipase that is able to hydrolyze both the neutral triacylglycerols and the monopalmitate ester Tween 40, allowing the use of hydrolyzed products as carbon sources. Has broad lipolytic activity, which may be important for colonization and subsequent infection, therefore contributing to the persistence and virulence in human tissue. The sequence is that of Lipase 1 from Candida albicans (strain SC5314 / ATCC MYA-2876) (Yeast).